The chain runs to 488 residues: 3-octaprenyl-4-hydroxybenzoate carboxy-lyase (488 aa).

N172 lines the Mn(2+) pocket. Residues 175 to 177 (IYR), 189 to 191 (RWL), and 194 to 195 (RG) contribute to the prenylated FMN site. E238 serves as a coordination point for Mn(2+). Catalysis depends on D287, which acts as the Proton donor.

Belongs to the UbiD family. In terms of assembly, homohexamer. Requires prenylated FMN as cofactor. It depends on Mn(2+) as a cofactor.

Its subcellular location is the cell membrane. The catalysed reaction is a 4-hydroxy-3-(all-trans-polyprenyl)benzoate + H(+) = a 2-(all-trans-polyprenyl)phenol + CO2. It functions in the pathway cofactor biosynthesis; ubiquinone biosynthesis. Its function is as follows. Catalyzes the decarboxylation of 3-octaprenyl-4-hydroxy benzoate to 2-octaprenylphenol, an intermediate step in ubiquinone biosynthesis. The protein is 3-octaprenyl-4-hydroxybenzoate carboxy-lyase of Pseudoalteromonas translucida (strain TAC 125).